We begin with the raw amino-acid sequence, 225 residues long: uncharacterized protein (225 aa).

Asn-48, Asn-58, Asn-105, and Asn-108 each carry an N-linked (GlcNAc...) asparagine; by host glycan. Residues 156 to 178 (LWGYLKQPLVMVGIAAVVGYLIY) form a helical membrane-spanning segment.

It belongs to the ascovirus HvAv ORF58 family.

It localises to the membrane. This is an uncharacterized protein from Heliothis virescens ascovirus 3e (HvAV-3e).